A 329-amino-acid chain; its full sequence is Quinone-oxidoreductase QR1, chloroplastic (329 aa).

Belongs to the zinc-containing alcohol dehydrogenase family. Quinone oxidoreductase subfamily.

Its subcellular location is the plastid. The protein resides in the chloroplast outer membrane. The enzyme catalyses 2 a quinone + NADPH + H(+) = 2 a 1,4-benzosemiquinone + NADP(+). With respect to regulation, inhibited by dicumarol. Its function is as follows. NADPH-dependent single-electron reducing quinone reductase. Involved in haustorium initiation in parasitic plants through redox cycling of exogenous haustorium-inducing factors. Can use 9,10-phenanthrenequinone (PAQ), 1,2-naphthoquinone, 5-hydroxy-1,4-naphthoquinone (juglone) and 2,6-dimethoxy-p-benzoquinone (DMBQ) as substrates, but has no activity with menadione, diamide, 2,3-dimethoxy-5-methyl-1,4-benzoquinone or 1,4-naphthoquinone. This is Quinone-oxidoreductase QR1, chloroplastic from Triphysaria versicolor (Yellow owl's clover).